The chain runs to 231 residues: Orotidine 5'-phosphate decarboxylase (231 aa).

Substrate contacts are provided by residues D11, K33, 60–69 (DLKFHDIPNT), T120, R181, Q190, G210, and R211. The Proton donor role is filled by K62.

The protein belongs to the OMP decarboxylase family. Type 1 subfamily. As to quaternary structure, homodimer.

It catalyses the reaction orotidine 5'-phosphate + H(+) = UMP + CO2. The protein operates within pyrimidine metabolism; UMP biosynthesis via de novo pathway; UMP from orotate: step 2/2. Its function is as follows. Catalyzes the decarboxylation of orotidine 5'-monophosphate (OMP) to uridine 5'-monophosphate (UMP). The polypeptide is Orotidine 5'-phosphate decarboxylase (Colwellia psychrerythraea (strain 34H / ATCC BAA-681) (Vibrio psychroerythus)).